The chain runs to 142 residues: Large ribosomal subunit protein uL11 (142 aa).

The protein belongs to the universal ribosomal protein uL11 family. In terms of assembly, part of the ribosomal stalk of the 50S ribosomal subunit. Interacts with L10 and the large rRNA to form the base of the stalk. L10 forms an elongated spine to which L12 dimers bind in a sequential fashion forming a multimeric L10(L12)X complex. One or more lysine residues are methylated.

Its function is as follows. Forms part of the ribosomal stalk which helps the ribosome interact with GTP-bound translation factors. The polypeptide is Large ribosomal subunit protein uL11 (Enterobacter sp. (strain 638)).